Reading from the N-terminus, the 307-residue chain is Malate dehydrogenase (307 aa).

NAD(+) is bound by residues 8–13 (GAGNVG) and aspartate 32. Substrate is bound by residues arginine 81 and arginine 87. NAD(+) contacts are provided by residues asparagine 94 and 117–119 (VTN). Residues asparagine 119 and arginine 150 each contribute to the substrate site. Catalysis depends on histidine 174, which acts as the Proton acceptor.

Belongs to the LDH/MDH superfamily.

The catalysed reaction is (S)-malate + NAD(+) = oxaloacetate + NADH + H(+). Functionally, catalyzes the reversible oxidation of malate to oxaloacetate. The polypeptide is Malate dehydrogenase (mdh) (Methanosarcina acetivorans (strain ATCC 35395 / DSM 2834 / JCM 12185 / C2A)).